A 155-amino-acid polypeptide reads, in one-letter code: uncharacterized protein (155 aa).

A run of 2 helical transmembrane segments spans residues 33–53 (ITLL…LFLL) and 83–103 (IGAV…GIWV).

The protein to E.coli YdgK.

The protein localises to the cell membrane. This is an uncharacterized protein from Synechocystis sp. (strain ATCC 27184 / PCC 6803 / Kazusa).